Consider the following 873-residue polypeptide: Tyrosine-protein kinase receptor TYRO3 (873 aa).

Positions 1-28 (MELRRSMALPRLLLLGLWAAALRDGAVA) are cleaved as a signal peptide. Ig-like C2-type domains follow at residues 29–116 (AGMK…KEES) and 127–208 (PYFT…ATVQ). The Extracellular portion of the chain corresponds to 29–416 (AGMKFTGSPI…QRQPPYGTSW (388 aa)). Asparagine 51 carries N-linked (GlcNAc...) asparagine glycosylation. Cystine bridges form between cysteine 52–cysteine 105 and cysteine 148–cysteine 191. N-linked (GlcNAc...) asparagine glycosylation is found at asparagine 179, asparagine 184, asparagine 218, asparagine 228, asparagine 281, asparagine 353, and asparagine 367. 2 Fibronectin type-III domains span residues 215 to 308 (PPLN…TLEL) and 310 to 403 (PSST…AQEV). The chain crosses the membrane as a helical span at residues 417-437 (VPVALGILTALVTAVALALIL). Residues 438-873 (LRKRRKETRF…ELETEGEKSC (436 aa)) are Cytoplasmic-facing. Positions 505–776 (FTLGRMLGKG…GVLRSQLEMI (272 aa)) constitute a Protein kinase domain. Residues 511–519 (LGKGEFGSV) and lysine 537 contribute to the ATP site. Residue aspartate 642 is the Proton acceptor of the active site. Residue tyrosine 673 is modified to Phosphotyrosine; by autocatalysis. The disordered stretch occupies residues 845 to 873 (VEGERHPEGQEGENKSLLYELETEGEKSC). Basic and acidic residues predominate over residues 847-858 (GERHPEGQEGEN).

It belongs to the protein kinase superfamily. Tyr protein kinase family. AXL/UFO subfamily. Post-translationally, autophosphorylated on tyrosine residues. As to expression, detected in embryonic retina (at protein level). detected in brain, retina, kidney and in retinal Mueller glia-like cells.

It localises to the cell membrane. It carries out the reaction L-tyrosyl-[protein] + ATP = O-phospho-L-tyrosyl-[protein] + ADP + H(+). Functionally, receptor tyrosine kinase that transduces signals from the extracellular matrix into the cytoplasm by binding to several ligands. Regulates many physiological processes including cell survival, migration and differentiation. Ligand binding at the cell surface induces dimerization and autophosphorylation of TYRO3 on its intracellular domain that provides docking sites for downstream signaling molecules. Following activation by ligand, enhances PI3-kinase activity and activates the AKT survival pathway, including nuclear translocation of NF-kappa-B and up-regulation of transcription of NF-kappa-B-regulated genes. In Gallus gallus (Chicken), this protein is Tyrosine-protein kinase receptor TYRO3 (TYRO3).